The sequence spans 220 residues: ATP-dependent Clp protease proteolytic subunit (220 aa).

Serine 125 acts as the Nucleophile in catalysis. Histidine 150 is an active-site residue.

It belongs to the peptidase S14 family. As to quaternary structure, fourteen ClpP subunits assemble into 2 heptameric rings which stack back to back to give a disk-like structure with a central cavity, resembling the structure of eukaryotic proteasomes.

It localises to the cytoplasm. It catalyses the reaction Hydrolysis of proteins to small peptides in the presence of ATP and magnesium. alpha-casein is the usual test substrate. In the absence of ATP, only oligopeptides shorter than five residues are hydrolyzed (such as succinyl-Leu-Tyr-|-NHMec, and Leu-Tyr-Leu-|-Tyr-Trp, in which cleavage of the -Tyr-|-Leu- and -Tyr-|-Trp bonds also occurs).. Cleaves peptides in various proteins in a process that requires ATP hydrolysis. Has a chymotrypsin-like activity. Plays a major role in the degradation of misfolded proteins. This chain is ATP-dependent Clp protease proteolytic subunit, found in Bacteroides thetaiotaomicron (strain ATCC 29148 / DSM 2079 / JCM 5827 / CCUG 10774 / NCTC 10582 / VPI-5482 / E50).